The following is a 322-amino-acid chain: Replication factor C small subunit (322 aa).

Residue 50-57 (GPAGTGKT) coordinates ATP.

Belongs to the activator 1 small subunits family. RfcS subfamily. Heteromultimer composed of small subunits (RfcS) and large subunits (RfcL).

Functionally, part of the RFC clamp loader complex which loads the PCNA sliding clamp onto DNA. The protein is Replication factor C small subunit of Halobacterium salinarum (strain ATCC 700922 / JCM 11081 / NRC-1) (Halobacterium halobium).